We begin with the raw amino-acid sequence, 199 residues long: VPKRDLISQNIESRYEKLEFLDLAVWGKEKKQKYLLSTDNISFYCYFDTSKTSESERKHTFHSDNKQLNSIVDLIIKHSEKTKNIKEELEKYSQFLDKILDLKPTKKQVEKLLENQNLISKNFDYIKEQNTQLEKSLRKTVKLEDSINTLLVEIQQARPKEVELRTLKIAEQNSKAIEKFEQEIKDLREILEFLKHQAT.

The chain is Protein P1 from Rice tungro bacilliform virus (isolate Philippines) (RTBV).